Consider the following 299-residue polypeptide: Transcription termination/antitermination protein NusG (299 aa).

Residues 30-96 (DPDEAELADA…APVEPAEPVD (67 aa)) are disordered. Tandem repeats lie at residues 46–49 (EEAA) and 70–73 (EEAA). Positions 46–87 (EEAALHVESDEDEDEADVEVDAAVEEAADDAEVAEEEAEEAA) are 4 X 4 AA repeats of E-E-A-A. Positions 54–87 (SDEDEDEADVEVDAAVEEAADDAEVAEEEAEEAA) are enriched in acidic residues. The stretch at 80–83 (EEEA) is one 3; approximate repeat. Repeat unit 4 spans residues 84–87 (EEAA). A KOW domain is found at 248 to 276 (VGDSVTVTDGPFATLQATINEINPDSKKV).

Belongs to the NusG family. The N-terminus is blocked.

Its function is as follows. Participates in transcription elongation, termination and antitermination. The polypeptide is Transcription termination/antitermination protein NusG (Streptomyces virginiae (Streptomyces cinnamonensis)).